The chain runs to 715 residues: ABC transporter F family member 3 (715 aa).

Thr-2 bears the N-acetylthreonine mark. A disordered region spans residues 96 to 118 (VRMNDGMDDGPVKKKKPEPVDGP). ABC transporter domains follow at residues 175 to 436 (IHMD…KNQQ) and 504 to 713 (ISFS…LLQS). ATP contacts are provided by residues 207 to 214 (GRNGTGKT) and 537 to 544 (GPNGIGKS).

It belongs to the ABC transporter superfamily. ABCF family. EF3 (TC 3.A.1.121) subfamily.

This is ABC transporter F family member 3 (ABCF3) from Arabidopsis thaliana (Mouse-ear cress).